We begin with the raw amino-acid sequence, 570 residues long: Hydroxylamine reductase (570 aa).

Residues Cys-5, Cys-8, Cys-17, and Cys-23 each coordinate [4Fe-4S] cluster. Hybrid [4Fe-2O-2S] cluster contacts are provided by His-266, Glu-290, Cys-334, Cys-425, Cys-453, Cys-478, Glu-513, and Lys-515. The residue at position 425 (Cys-425) is a Cysteine persulfide.

It belongs to the HCP family. [4Fe-4S] cluster is required as a cofactor. Hybrid [4Fe-2O-2S] cluster serves as cofactor.

It is found in the cytoplasm. The enzyme catalyses A + NH4(+) + H2O = hydroxylamine + AH2 + H(+). Its function is as follows. Catalyzes the reduction of hydroxylamine to form NH(3) and H(2)O. The chain is Hydroxylamine reductase from Clostridium botulinum (strain ATCC 19397 / Type A).